The following is a 61-amino-acid chain: Small ribosomal subunit protein uS14 (61 aa).

Residues 1 to 14 (MAKTSQKVRNHRPA) are compositionally biased toward basic residues. The disordered stretch occupies residues 1 to 20 (MAKTSQKVRNHRPAKFSSRE). Residues cysteine 24, cysteine 27, cysteine 40, and cysteine 43 each coordinate Zn(2+).

The protein belongs to the universal ribosomal protein uS14 family. Zinc-binding uS14 subfamily. Part of the 30S ribosomal subunit. Contacts proteins S3 and S10. Zn(2+) serves as cofactor.

Its function is as follows. Binds 16S rRNA, required for the assembly of 30S particles and may also be responsible for determining the conformation of the 16S rRNA at the A site. In Lactobacillus delbrueckii subsp. bulgaricus (strain ATCC 11842 / DSM 20081 / BCRC 10696 / JCM 1002 / NBRC 13953 / NCIMB 11778 / NCTC 12712 / WDCM 00102 / Lb 14), this protein is Small ribosomal subunit protein uS14.